Here is a 225-residue protein sequence, read N- to C-terminus: UPF0758 protein XOO0462 (225 aa).

Positions 102 to 224 (ALSDPPSVGR…PVSLAERGWL (123 aa)) constitute an MPN domain. Residues H173, H175, and D186 each coordinate Zn(2+). Residues 173–186 (HNHPSGNPEPSEAD) carry the JAMM motif motif.

Belongs to the UPF0758 family.

This Xanthomonas oryzae pv. oryzae (strain MAFF 311018) protein is UPF0758 protein XOO0462.